We begin with the raw amino-acid sequence, 118 residues long: Small ribosomal subunit protein mS37 (118 aa).

Residues 42–84 (EATCITEMSVMMACWKQNEFRDDACRKEIQGFLDCAARAQEAR) form the CHCH domain. Short sequence motifs (cx9C motif) lie at residues 45–55 (CITEMSVMMAC) and 66–76 (CRKEIQGFLDC). 2 cysteine pairs are disulfide-bonded: Cys45–Cys76 and Cys55–Cys66.

It belongs to the mitochondrion-specific ribosomal protein mS37 family. Component of the mitochondrial small ribosomal subunit (mt-SSU). Mature mammalian 55S mitochondrial ribosomes consist of a small (28S) and a large (39S) subunit. The 28S small subunit contains a 12S ribosomal RNA (12S mt-rRNA) and 30 different proteins. The 39S large subunit contains a 16S rRNA (16S mt-rRNA), a copy of mitochondrial valine transfer RNA (mt-tRNA(Val)), which plays an integral structural role, and 52 different proteins.

Its subcellular location is the mitochondrion. The protein resides in the nucleus. The sequence is that of Small ribosomal subunit protein mS37 (CHCHD1) from Homo sapiens (Human).